A 41-amino-acid chain; its full sequence is Pathogenesis-related protein (41 aa).

Belongs to the CRISP family.

Its function is as follows. Probably involved in the defense reaction of plants against pathogens. This chain is Pathogenesis-related protein, found in Cucumis melo (Muskmelon).